The primary structure comprises 656 residues: Pyoverdine export ATP-binding/permease protein PvdT (656 aa).

Residues 6 to 245 (IDLRAIRKSY…SANPAALQAV (240 aa)) form the ABC transporter domain. 43-50 (GASGSGKS) contributes to the ATP binding site. Transmembrane regions (helical) follow at residues 284 to 304 (ALTL…LAVG), 538 to 558 (IAAI…LMTV), 589 to 609 (LSVV…AALL), and 619 to 639 (VPAV…FGFM).

This sequence belongs to the ABC transporter superfamily. Macrolide exporter (TC 3.A.1.122) family. As to quaternary structure, part of the tripartite efflux system PvdRT-OpmQ, which is composed of an inner membrane component with both ATPase and permease domains, PvdT, a periplasmic membrane fusion protein, PvdR, and an outer membrane component, OpmQ.

The protein localises to the cell inner membrane. Part of the tripartite efflux system PvdRT-OpmQ required for the secretion into the extracellular milieu of the siderophore pyoverdine (PVD), which is involved in iron acquisition. This subunit binds PVD and drives its secretion by hydrolyzing ATP. The system is responsible for export of newly synthesized PVD after the final steps of biosynthesis have taken place in the periplasm. It is also responsible for recycling of PVD after internalization of ferri-PVD into the periplasm by the outer-membrane receptor FpvA and release of iron from PVD, thus making PVD available for new cycles of iron uptake. This is Pyoverdine export ATP-binding/permease protein PvdT from Pseudomonas savastanoi pv. phaseolicola (strain 1448A / Race 6) (Pseudomonas syringae pv. phaseolicola (strain 1448A / Race 6)).